Consider the following 400-residue polypeptide: MTERVVLAYSGGLDTSVAIGWIGAETGAEVVALAVDVGQGGEDLEAIRQRALTCGAVESIVVDARTEFAESFVAPAIRSNALYMDRYPLISSLSRPIIVKHLVEAAREHGADAIAHGCTGKGNDQVRFEVGVSALAPGLKVLAPVRDSGMTRDKAIAFAEERGLPIDVSKRSPYSIDQNLWGRTAECGILEDPWAQPPEDVFVYSADPTVARTPDEVTISFTDGVPTGLDGRSLSLAELVAELNTRAGAHGVGRIDMIEDRLVGIKSREIYECPAAITLLTAHRDLEDLTLERDVARFKRGVDQRWGEIVYDGLWYSPLKAALDAFVDAASAGVDGDVRLRLAGGVAQVVGRRSPGSLYDHALATYDAGDQFDQGDARGFIELWGLPTKVWAAREQRLNP.

Residue 8-16 (AYSGGLDTS) coordinates ATP. Residues Tyr-87 and Ser-92 each coordinate L-citrulline. Position 117 (Gly-117) interacts with ATP. 3 residues coordinate L-aspartate: Thr-119, Asn-123, and Asp-124. Asn-123 provides a ligand contact to L-citrulline. 4 residues coordinate L-citrulline: Arg-127, Ser-175, Glu-259, and Tyr-271.

This sequence belongs to the argininosuccinate synthase family. Type 1 subfamily. As to quaternary structure, homotetramer.

It localises to the cytoplasm. It carries out the reaction L-citrulline + L-aspartate + ATP = 2-(N(omega)-L-arginino)succinate + AMP + diphosphate + H(+). It functions in the pathway amino-acid biosynthesis; L-arginine biosynthesis; L-arginine from L-ornithine and carbamoyl phosphate: step 2/3. The sequence is that of Argininosuccinate synthase from Frankia alni (strain DSM 45986 / CECT 9034 / ACN14a).